The chain runs to 437 residues: GTP-binding protein ERG (437 aa).

Residues 39–50 (QPNLDEPTSINE) are compositionally biased toward polar residues. The segment at 39–65 (QPNLDEPTSINEDGSSSDSVFDSSQYP) is disordered. Residues 51–62 (DGSSSDSVFDSS) show a composition bias toward low complexity. Phosphoserine occurs at positions 111 and 112. The 182-residue stretch at 152–333 (KSLNVGIIGP…LMDQAVKKPW (182 aa)) folds into the Era-type G domain. Residues 160 to 167 (GPPNAGKS) are G1. 160–167 (GPPNAGKS) contacts GTP. Residues 186–190 (NTTTH) are G2. The interval 207–210 (DTPG) is G3. Residues 207–211 (DTPGL) and 279–282 (NKVD) contribute to the GTP site. Residues 279–282 (NKVD) are G4. The interval 309 to 311 (ISG) is G5. The 77-residue stretch at 361 to 437 (VHQEIPYGLE…VHLILQVKLK (77 aa)) folds into the KH type-2 domain.

Belongs to the TRAFAC class TrmE-Era-EngA-EngB-Septin-like GTPase superfamily. Era GTPase family.

In terms of biological role, has a crucial role in plant growth and development, possibly by influencing mitochondrial division. In Arabidopsis thaliana (Mouse-ear cress), this protein is GTP-binding protein ERG (ERG).